Consider the following 98-residue polypeptide: Biogenesis of lysosome-related organelles complex 1 subunit SNN1 (98 aa).

Positions 55 to 98 (MDEQELLQEEGSLKEELARVNQLKKRLDKLTELYAELARKCGAL) form a coiled coil.

Belongs to the SNAPIN family. In terms of assembly, component of the biogenesis of lysosome-related organelles complex-1 (BLOC-1).

It is found in the endosome. In terms of biological role, component of the biogenesis of lysosome-related organelles complex-1 (BLOC-1), a complex involved in endosomal cargo sorting. This chain is Biogenesis of lysosome-related organelles complex 1 subunit SNN1 (SNN1), found in Eremothecium gossypii (strain ATCC 10895 / CBS 109.51 / FGSC 9923 / NRRL Y-1056) (Yeast).